The following is a 913-amino-acid chain: Tyrosine-protein phosphatase non-receptor type 3 (913 aa).

The FERM domain occupies 29–312 (VICSIRFLDG…EHHSFFQAKK (284 aa)). Phosphoserine is present on residues Ser357, Ser359, and Ser367. Disordered stretches follow at residues 364-400 (ETKS…DNLA) and 417-473 (KGPL…PDGV). At Thr376 the chain carries Phosphothreonine. Ser381 is modified (phosphoserine). Residues 382-393 (PRLRHEIRKPRH) are compositionally biased toward basic residues. Ser425 carries the post-translational modification Phosphoserine. Polar residues predominate over residues 441–453 (SENNPAQSCLTQK). The segment covering 454-470 (SSSSVSPSSNAPGSCSP) has biased composition (low complexity). Residues 510–582 (LIRITPDEEG…DQVVMFIKAS (73 aa)) form the PDZ domain. Residues 646–901 (VLIQFEQLYR…KFVCEAILRV (256 aa)) form the Tyrosine-protein phosphatase domain. Substrate contacts are provided by residues Asp811, 842 to 848 (CSAGIGR), and Gln886. Catalysis depends on Cys842, which acts as the Phosphocysteine intermediate.

This sequence belongs to the protein-tyrosine phosphatase family. Non-receptor class subfamily.

It localises to the cell membrane. Its subcellular location is the cytoplasm. The protein localises to the cytoskeleton. It catalyses the reaction O-phospho-L-tyrosyl-[protein] + H2O = L-tyrosyl-[protein] + phosphate. Its function is as follows. May act at junctions between the membrane and the cytoskeleton. The polypeptide is Tyrosine-protein phosphatase non-receptor type 3 (Ptpn3) (Mus musculus (Mouse)).